The chain runs to 634 residues: MGLVTVGELKPAFTGKRGFRLNSTIRHASEWPISDVSSDLTVQVGSSSFCLHKFPLVSRSGKIRKLLADPKISNVCLSNAPGGSEAFELAAKFCYGINIEINLLNIAKLRCASHYLEMTEDFSEENLASKTEHFLKETIFPSILNSIIVLHHCETLIPVSEDLNLVNRLIIAVANNACKEQLTSGLLKLDYSFSGTNIEPQTPLDWWGKSLAVLNLDFFQRVISAVKSKGLIQDVISKILISYTNKSLQGLIVRDPKLEKERVLDSEGKKKQRLIVETIVRLLPTQGRRSSVPMAFLSSLLKMVIATSSSASTGSCRSDLERRIGLQLDQAILEDVLIPINLNGTNNTMYDIDSILRIFSIFLNLDEDDEEEEHHHLQFRDETEMIYDFDSPGSPKQSSILKVSKLMDNYLAEIAMDPNLTTSKFIALAELLPDHARIISDGLYRAVDIYLKVHPNIKDSERYRLCKTIDSQKLSQEACSHAAQNERLPVQMAVQVLYFEQIRLRNAMSSSIGPTQFLFNSNCHQFPQRSGSGAGSGAISPRDNYASVRRENRELKLEVARMRMRLTDLEKDHISIKQELVKSNPGTKLFKSFAKKISKLNSLFSFSSLKPSLSGKASSESRFLFQRKRRHSVS.

A BTB domain is found at 38 to 103 (SDLTVQVGSS…CYGINIEINL (66 aa)). One can recognise an NPH3 domain in the interval 205 to 503 (DWWGKSLAVL…VQVLYFEQIR (299 aa)). Position 444 is a phosphotyrosine (tyrosine 444). The stretch at 542–580 (RDNYASVRRENRELKLEVARMRMRLTDLEKDHISIKQEL) forms a coiled coil.

Belongs to the NPH3 family.

It functions in the pathway protein modification; protein ubiquitination. Functionally, may act as a substrate-specific adapter of an E3 ubiquitin-protein ligase complex (CUL3-RBX1-BTB) which mediates the ubiquitination and subsequent proteasomal degradation of target proteins. The protein is BTB/POZ domain-containing protein At1g03010 of Arabidopsis thaliana (Mouse-ear cress).